A 435-amino-acid chain; its full sequence is Cyclic 2,3-diphosphoglycerate synthetase (435 aa).

This sequence belongs to the cyclic 2,3-diphosphoglycerate synthetase family.

It is found in the cytoplasm. The enzyme catalyses (2R)-2,3-bisphosphoglycerate + ATP + H(+) = cyclic (2R)-2,3-bisphosphoglycerate + ADP + phosphate. Its function is as follows. Catalyzes the formation of cyclic 2,3-diphosphoglycerate (cDPG) by formation of an intramolecular phosphoanhydride bond at the expense of ATP. The protein is Cyclic 2,3-diphosphoglycerate synthetase of Pyrococcus horikoshii (strain ATCC 700860 / DSM 12428 / JCM 9974 / NBRC 100139 / OT-3).